A 174-amino-acid polypeptide reads, in one-letter code: Protein FanG (174 aa).

The first 21 residues, 1-21 (MKKLYKAITVICILMSNLQSA), serve as a signal peptide directing secretion. A disulfide bond links C41 and C75.

Its subcellular location is the fimbrium. In terms of biological role, involved in the biosynthesis of K99 fimbriae. The chain is Protein FanG (fanG) from Escherichia coli.